A 351-amino-acid polypeptide reads, in one-letter code: Protein-glutamate methylesterase/protein-glutamine glutaminase (351 aa).

Residues 8–125 (TVVVVDDSLT…GEDPFAGLGD (118 aa)) enclose the Response regulatory domain. A 4-aspartylphosphate modification is found at Asp59. A CheB-type methylesterase domain is found at 151–345 (PKIGTVVGIG…PAILNLCERR (195 aa)). Residues Ser162, His188, and Asp287 contribute to the active site.

The protein belongs to the CheB family. In terms of processing, phosphorylated by CheA. Phosphorylation of the N-terminal regulatory domain activates the methylesterase activity.

It is found in the cytoplasm. It carries out the reaction [protein]-L-glutamate 5-O-methyl ester + H2O = L-glutamyl-[protein] + methanol + H(+). The catalysed reaction is L-glutaminyl-[protein] + H2O = L-glutamyl-[protein] + NH4(+). Functionally, involved in chemotaxis. Part of a chemotaxis signal transduction system that modulates chemotaxis in response to various stimuli. Catalyzes the demethylation of specific methylglutamate residues introduced into the chemoreceptors (methyl-accepting chemotaxis proteins or MCP) by CheR. Also mediates the irreversible deamidation of specific glutamine residues to glutamic acid. The protein is Protein-glutamate methylesterase/protein-glutamine glutaminase of Gluconobacter oxydans (strain 621H) (Gluconobacter suboxydans).